The sequence spans 105 residues: Large ribosomal subunit protein eL36 (105 aa).

The protein belongs to the eukaryotic ribosomal protein eL36 family. In terms of assembly, component of the large ribosomal subunit.

It is found in the cytoplasm. The protein resides in the cytosol. Functionally, component of the large ribosomal subunit. The ribosome is a large ribonucleoprotein complex responsible for the synthesis of proteins in the cell. The chain is Large ribosomal subunit protein eL36 (RPL36) from Hydrophis hardwickii (Hardwick's spine-bellied seasnake).